We begin with the raw amino-acid sequence, 522 residues long: Cell polarity protein mod5 (522 aa).

5 disordered regions span residues 1-83 (MSAL…PDGD), 119-158 (KRSA…FNSN), 170-192 (RRIL…TKSA), 251-285 (PLQP…SPVP), and 300-516 (YSPS…KLEK). Polar residues-rich tracts occupy residues 27 to 46 (PNTT…SAPS), 66 to 76 (LPSSKQDTGSS), and 131 to 146 (NGST…SPSE). Position 43 is a phosphoserine (serine 43). Low complexity predominate over residues 258-285 (PANETPASSSSSAKARPVSVPDMSSPVP). A Phosphoserine modification is found at serine 303. Residues 308 to 318 (KVAETDSESRK) are compositionally biased toward basic and acidic residues. Residues 335–349 (GAQTQSTPNRISRSD) are compositionally biased toward polar residues. Phosphoserine is present on serine 350. Polar residues-rich tracts occupy residues 363–396 (NAST…TSTN) and 404–431 (DIPQ…TPQV). A compositionally biased stretch (low complexity) spans 439 to 452 (SRSSPLPSASVPAL). Composition is skewed to basic and acidic residues over residues 472-482 (HESEMPPHVTR) and 495-516 (PKEK…KLEK).

Interacts with tea1 and tea3.

The protein localises to the cell membrane. Functionally, with tea1, acts in a positive-feedback loop in the microtubule-mediated regulation of cell polarity. Involved in the anchoring of tea1 at the cortex as well as the correct localization of tea3. The chain is Cell polarity protein mod5 (mod5) from Schizosaccharomyces pombe (strain 972 / ATCC 24843) (Fission yeast).